A 422-amino-acid chain; its full sequence is Cysteate synthase (422 aa).

At Lys-105 the chain carries N6-(pyridoxal phosphate)lysine. Residues Asn-131 and Thr-379 each contribute to the pyridoxal 5'-phosphate site.

The protein belongs to the threonine synthase family. Cysteate synthase subfamily. In terms of assembly, homotrimer. Pyridoxal 5'-phosphate is required as a cofactor.

The catalysed reaction is O-phospho-L-serine + sulfite + H(+) = L-cysteate + phosphate. The protein operates within cofactor biosynthesis; coenzyme M biosynthesis. Functionally, specifically catalyzes the beta-elimination of phosphate from L-phosphoserine and the beta-addition of sulfite to the dehydroalanine intermediate to produce L-cysteate. This is Cysteate synthase from Methanospirillum hungatei JF-1 (strain ATCC 27890 / DSM 864 / NBRC 100397 / JF-1).